Here is a 316-residue protein sequence, read N- to C-terminus: uncharacterized protein (316 aa).

The tract at residues 1–34 (MATKRKIGDGYSSSDDNQPKRERSEGGEDQQLVP) is disordered. Residues 17–26 (NQPKRERSEG) show a composition bias toward basic and acidic residues.

This is an uncharacterized protein from Lepidoptera (butterflies and moths).